The following is a 11197-amino-acid chain: Nonribosomal peptide synthetase 5 (11197 aa).

The tract at residues 19–413 is adenylation (A) domain 1; sequence AQRARKQPDA…DGTLQVVGHK (395 aa). Residues 426–452 form a disordered region; sequence HASSSASSVGETPGVTGPISTPMGDSV. A condensation (C) domain 1 region spans residues 690–897; sequence KQLRQFCQEQ…LMDESMKQQI (208 aa). The interval 918-1310 is adenylation (A) domain 2; it reads DAAQDYPDAP…GRHDGQLKVR (393 aa). The region spanning 1446–1522 is the Carrier 1 domain; the sequence is ADRSPVHMML…DMANNIAISE (77 aa). At Ser-1483 the chain carries O-(pantetheine 4'-phosphoryl)serine. Positions 1952 to 2380 are condensation (C) domain 2; sequence VEDVYPCSPV…SDISLMDPLS (429 aa). The segment at 2406–2805 is adenylation (A) domain 3; the sequence is VARIEPDKMA…QRKDTQIKIR (400 aa). A Carrier 2 domain is found at 2945–3021; the sequence is DSLTSTEVTI…SLAAFVDYDS (77 aa). O-(pantetheine 4'-phosphoryl)serine is present on Ser-2982. An epimerase (E) domain 1 region spans residues 3041–3481; the sequence is EESFALSPIQ…TSTMKSEFTL (441 aa). Positions 3515–3957 are condensation (C) domain 3; sequence EEIFPCSPMQ…VSPETRCELD (443 aa). The tract at residues 3976–4371 is adenylation (A) domain 4; it reads FEQQVEKIPD…RRRDNQVKVR (396 aa). The region spanning 4508 to 4584 is the Carrier 3 domain; that stretch reads RKLTPMEQQL…ELANHARFKA (77 aa). Ser-4545 bears the O-(pantetheine 4'-phosphoryl)serine mark. The epimerase (E) domain 2 stretch occupies residues 4603-5022; it reads FPLLPIQRMF…LNEYTAALRS (420 aa). The tract at residues 5069 to 5501 is condensation (C) domain 4; it reads ESIYPCSPLQ…LVGDSERQGL (433 aa). Positions 5521 to 5918 are adenylation (A) domain 5; the sequence is EAQVKAIPDN…RRKDTQVKVR (398 aa). The 74-residue stretch at 6068 to 6141 folds into the Carrier 4 domain; that stretch reads SEAEDIIRAV…ALAQFVSQST (74 aa). Position 6102 is an O-(pantetheine 4'-phosphoryl)serine (Ser-6102). The tract at residues 6162–6512 is epimerase (E) domain 3; sequence FSLSPIQQMF…MEILFNYFGQ (351 aa). The tract at residues 6636-7076 is condensation (C) domain 5; the sequence is EEIFPCSPIQ…LVGAETRREM (441 aa). The segment at 7097-7491 is adenylation (A) domain 6; that stretch reads ERNSQAMPDR…RRRDNQVKVR (395 aa). One can recognise a Carrier 5 domain in the interval 7636–7712; it reads KPKTKMEEHF…DLAGRSRFKN (77 aa). Ser-7673 bears the O-(pantetheine 4'-phosphoryl)serine mark. Residues 7733–8162 form an epimerase (E) domain 4 region; sequence ALLPIQRLFF…KYMLETLASQ (430 aa). Residues 8205–8638 are condensation (C) domain 6; sequence EASYPCSPLQ…MLGDSGRKRI (434 aa). An adenylation (A) domain 7 region spans residues 8660–8832; it reads EAHVKESPNR…DHRATATEIV (173 aa). The region spanning 9173 to 9248 is the Carrier 6 domain; that stretch reads SAQTAVVQII…AMAAKAQQIG (76 aa). Ser-9209 carries the post-translational modification O-(pantetheine 4'-phosphoryl)serine. The interval 9565-9683 is epimerase (E) domain 5; sequence RVKDMRRAIP…LHEVVSALQK (119 aa). The segment at 9721–10116 is condensation (C) domain 7; sequence VEDVYPTSPM…LVPAKHMEQL (396 aa). The tract at residues 10136 to 10529 is adenylation (A) domain 8; it reads DDMVRSTPTA…VGRKDTQIKI (394 aa). The Carrier 7 domain maps to 10663 to 10749; that stretch reads LDSSDYVAMQ…TLAVTIKADM (87 aa). Ser-10708 is subject to O-(pantetheine 4'-phosphoryl)serine. A thioesterase (TE) domain region spans residues 10806-11104; the sequence is NFLVTGSTGF…SLRPMSGPEW (299 aa).

The protein belongs to the NRP synthetase family.

Its pathway is secondary metabolite biosynthesis. Functionally, nonribosomal peptide synthetase; part of the Fg3_54/C64 gene cluster that mediates the biosynthesis of the octapeptide fusaoctaxin A, a virulence factor that is required for cell-to-cell invasiveness of plant host. The 2 nonribosomal peptide synthetases NRPS9 and NRPS5 form an assembly line which likely utilizes GABA as a starter unit (loaded on the unique module M1 of NRPS9) and sequentially incorporates seven extender units composed of the residues L-Ala, L-allo-Ile, L-Ser, L-Val, L-Ser, L-Leu and L-Leu, respectively. During the process, each of the residues that are tethered on modules M3-M7 of NRPS5 containing an E domain can undergo an epimerization reaction to produce a D-configuration before the transpeptidation reaction occurs. The elongation of the peptidyl chain might be terminated by module M8-mediated L-Leu incorporation, followed by R domain-catalyzed 4 electron reduction to release the resulting octapeptide from the assembly line as an alcohol. Fusaoctaxin A is cleaved by the cluster specific ABC transporter FGM5 to the pentapeptide fusapentaxin A and the tripeptide fusatrixin A. The other enzymes from the cluster, FGM1, FGM2, FGM3 and FGM9 seem not to be involved in the biosynthesis of fusaoctaxin A and their functions have still to be determined. In Gibberella zeae (strain ATCC MYA-4620 / CBS 123657 / FGSC 9075 / NRRL 31084 / PH-1) (Wheat head blight fungus), this protein is Nonribosomal peptide synthetase 5.